The primary structure comprises 176 residues: Large ribosomal subunit protein uL6 (176 aa).

It belongs to the universal ribosomal protein uL6 family. As to quaternary structure, part of the 50S ribosomal subunit.

In terms of biological role, this protein binds to the 23S rRNA, and is important in its secondary structure. It is located near the subunit interface in the base of the L7/L12 stalk, and near the tRNA binding site of the peptidyltransferase center. The polypeptide is Large ribosomal subunit protein uL6 (Paraburkholderia phymatum (strain DSM 17167 / CIP 108236 / LMG 21445 / STM815) (Burkholderia phymatum)).